A 277-amino-acid polypeptide reads, in one-letter code: Large ribosomal subunit protein uL2 (277 aa).

Positions 222–277 (GVAMNPVDHPHGGGEGRTSGGRHPVSPWGKPTKGKRTRSNKATDKFIMRTRHQRKK) are disordered.

This sequence belongs to the universal ribosomal protein uL2 family. As to quaternary structure, part of the 50S ribosomal subunit. Forms a bridge to the 30S subunit in the 70S ribosome.

Functionally, one of the primary rRNA binding proteins. Required for association of the 30S and 50S subunits to form the 70S ribosome, for tRNA binding and peptide bond formation. It has been suggested to have peptidyltransferase activity; this is somewhat controversial. Makes several contacts with the 16S rRNA in the 70S ribosome. The polypeptide is Large ribosomal subunit protein uL2 (Bartonella henselae (strain ATCC 49882 / DSM 28221 / CCUG 30454 / Houston 1) (Rochalimaea henselae)).